We begin with the raw amino-acid sequence, 393 residues long: 4-hydroxyphenylpyruvate dioxygenase (393 aa).

Threonine 2 is subject to N-acetylthreonine. VOC domains are found at residues 18–149 (HFHS…LVEK) and 180–338 (IIDH…IFTK). The residue at position 132 (lysine 132) is an N6-succinyllysine. Histidine 183 lines the Fe cation pocket. Phosphoserine is present on residues serine 211, serine 226, and serine 250. Positions 266 and 349 each coordinate Fe cation.

Belongs to the 4HPPD family. As to quaternary structure, homodimer. Fe cation serves as cofactor.

It is found in the cytoplasm. Its subcellular location is the endoplasmic reticulum membrane. The protein localises to the golgi apparatus membrane. It catalyses the reaction 3-(4-hydroxyphenyl)pyruvate + O2 = homogentisate + CO2. It functions in the pathway amino-acid degradation; L-phenylalanine degradation; acetoacetate and fumarate from L-phenylalanine: step 3/6. Its function is as follows. Catalyzes the conversion of 4-hydroxyphenylpyruvic acid to homogentisic acid, one of the steps in tyrosine catabolism. The chain is 4-hydroxyphenylpyruvate dioxygenase (HPD) from Bos taurus (Bovine).